We begin with the raw amino-acid sequence, 137 residues long: Phosphomevalonate dehydratase small subunit (137 aa).

S62 serves as the catalytic Proton acceptor.

It belongs to the AcnX type II small subunit family. In terms of assembly, heterodimer composed of a large subunit (PMDh-L) and a small subunit (PMDh-S).

It carries out the reaction (R)-5-phosphomevalonate = (2E)-3-methyl-5-phosphooxypent-2-enoate + H2O. It functions in the pathway isoprenoid biosynthesis; isopentenyl diphosphate biosynthesis via mevalonate pathway. Functionally, component of a hydro-lyase that catalyzes the dehydration of mevalonate 5-phosphate (MVA5P) to form trans-anhydromevalonate 5-phosphate (tAHMP). Involved in the archaeal mevalonate (MVA) pathway, which provides fundamental precursors for isoprenoid biosynthesis, such as isopentenyl diphosphate (IPP) and dimethylallyl diphosphate (DMAPP). This is Phosphomevalonate dehydratase small subunit from Methanothrix thermoacetophila (strain DSM 6194 / JCM 14653 / NBRC 101360 / PT) (Methanosaeta thermophila).